Reading from the N-terminus, the 311-residue chain is CARD domain-containing protein E10 (311 aa).

Residues 21-110 (IWDVERLCLE…EHLVDLLERA (90 aa)) enclose the CARD domain. Disordered stretches follow at residues 125–181 (ESGA…GGVY), 203–230 (GAGRGGSLLSGGHGGHPPHGGPGGGGRD), and 243–311 (IPEP…FFCC). A compositionally biased stretch (polar residues) spans 140–152 (EDNSGYTALLPTN). Over residues 252–272 (SGGGGRGGGVRYDAGGDGRLG) the composition is skewed to gly residues.

The protein localises to the host cell membrane. In terms of biological role, activates host NF-kappa-B and JNK pathways. Induces hyperphosphorylation and redistribution of host bcl-10 from the cytoplasm to the plasma membrane. The inhibitory effect of cellular bcl-10 on NF-kappa-B pathway is then overcome allowing NF-kappa-B activation. In Equus caballus (Horse), this protein is CARD domain-containing protein E10 (E10).